Consider the following 246-residue polypeptide: tRNA (guanine-N(1)-)-methyltransferase (246 aa).

S-adenosyl-L-methionine is bound by residues G117 and 137–142 (IGDYVL).

It belongs to the RNA methyltransferase TrmD family. In terms of assembly, homodimer.

The protein resides in the cytoplasm. The catalysed reaction is guanosine(37) in tRNA + S-adenosyl-L-methionine = N(1)-methylguanosine(37) in tRNA + S-adenosyl-L-homocysteine + H(+). Its function is as follows. Specifically methylates guanosine-37 in various tRNAs. The protein is tRNA (guanine-N(1)-)-methyltransferase of Acinetobacter baumannii (strain ACICU).